The following is a 164-amino-acid chain: SsrA-binding protein (164 aa).

This sequence belongs to the SmpB family.

Its subcellular location is the cytoplasm. Functionally, required for rescue of stalled ribosomes mediated by trans-translation. Binds to transfer-messenger RNA (tmRNA), required for stable association of tmRNA with ribosomes. tmRNA and SmpB together mimic tRNA shape, replacing the anticodon stem-loop with SmpB. tmRNA is encoded by the ssrA gene; the 2 termini fold to resemble tRNA(Ala) and it encodes a 'tag peptide', a short internal open reading frame. During trans-translation Ala-aminoacylated tmRNA acts like a tRNA, entering the A-site of stalled ribosomes, displacing the stalled mRNA. The ribosome then switches to translate the ORF on the tmRNA; the nascent peptide is terminated with the 'tag peptide' encoded by the tmRNA and targeted for degradation. The ribosome is freed to recommence translation, which seems to be the essential function of trans-translation. This Synechococcus sp. (strain CC9311) protein is SsrA-binding protein.